Consider the following 350-residue polypeptide: Phosphate acyltransferase (350 aa).

It belongs to the PlsX family. Homodimer. Probably interacts with PlsY.

Its subcellular location is the cytoplasm. The enzyme catalyses a fatty acyl-[ACP] + phosphate = an acyl phosphate + holo-[ACP]. It participates in lipid metabolism; phospholipid metabolism. In terms of biological role, catalyzes the reversible formation of acyl-phosphate (acyl-PO(4)) from acyl-[acyl-carrier-protein] (acyl-ACP). This enzyme utilizes acyl-ACP as fatty acyl donor, but not acyl-CoA. In Phenylobacterium zucineum (strain HLK1), this protein is Phosphate acyltransferase.